The sequence spans 121 residues: uncharacterized protein (121 aa).

Helical transmembrane passes span 2 to 22 (VFVTIIIIINISYNIYNIYTI), 42 to 62 (FICIYVCISGGNMPLWAYILF), and 89 to 109 (IFFAFCCHHIWSLLPHHLSIF).

It localises to the membrane. This is an uncharacterized protein from Saccharomyces cerevisiae (strain ATCC 204508 / S288c) (Baker's yeast).